Consider the following 119-residue polypeptide: Large ribosomal subunit protein bL20 (119 aa).

The protein belongs to the bacterial ribosomal protein bL20 family.

Binds directly to 23S ribosomal RNA and is necessary for the in vitro assembly process of the 50S ribosomal subunit. It is not involved in the protein synthesizing functions of that subunit. This chain is Large ribosomal subunit protein bL20, found in Shewanella woodyi (strain ATCC 51908 / MS32).